Consider the following 403-residue polypeptide: Phosphoglycerate kinase (403 aa).

Substrate-binding positions include 22 to 24, arginine 37, 60 to 63, arginine 119, and arginine 156; these read DLN and HLGR. ATP-binding positions include lysine 206, glycine 302, glutamate 333, and 359–362; that span reads GGDS.

This sequence belongs to the phosphoglycerate kinase family. As to quaternary structure, monomer.

The protein resides in the cytoplasm. The enzyme catalyses (2R)-3-phosphoglycerate + ATP = (2R)-3-phospho-glyceroyl phosphate + ADP. It functions in the pathway carbohydrate degradation; glycolysis; pyruvate from D-glyceraldehyde 3-phosphate: step 2/5. The chain is Phosphoglycerate kinase from Streptomyces griseus subsp. griseus (strain JCM 4626 / CBS 651.72 / NBRC 13350 / KCC S-0626 / ISP 5235).